We begin with the raw amino-acid sequence, 239 residues long: Probable transcriptional regulatory protein BCG9842_B4761 (239 aa).

The protein belongs to the TACO1 family. YeeN subfamily.

Its subcellular location is the cytoplasm. In Bacillus cereus (strain G9842), this protein is Probable transcriptional regulatory protein BCG9842_B4761.